The following is an 86-amino-acid chain: Cell division topological specificity factor (86 aa).

Belongs to the MinE family.

Prevents the cell division inhibition by proteins MinC and MinD at internal division sites while permitting inhibition at polar sites. This ensures cell division at the proper site by restricting the formation of a division septum at the midpoint of the long axis of the cell. This is Cell division topological specificity factor from Stenotrophomonas maltophilia (strain R551-3).